A 344-amino-acid polypeptide reads, in one-letter code: Arginase 2, chloroplastic/mitochondrial (344 aa).

The N-terminal 26 residues, 1-26, are a transit peptide targeting the chloroplast and mitochondrion; the sequence is MWKIGQRGVPYFQRLIAAPFTTLRSL. Positions 163, 187, 189, and 191 each coordinate Mn(2+). Residues 189–193, 197–199, and Asn228 each bind substrate; these read HPDIY and EGN. 2 residues coordinate Mn(2+): Asp272 and Asp274. Glu315 contacts substrate.

The protein belongs to the arginase family. It depends on Mn(2+) as a cofactor. In terms of tissue distribution, expressed in vasculature of roots, root tips, leaves and cotyledons.

The protein localises to the mitochondrion. Its subcellular location is the plastid. It is found in the chloroplast. It catalyses the reaction L-arginine + H2O = urea + L-ornithine. It carries out the reaction agmatine + H2O = urea + putrescine. Its pathway is nitrogen metabolism; urea cycle; L-ornithine and urea from L-arginine: step 1/1. It participates in amine and polyamine biosynthesis; putrescine biosynthesis via agmatine pathway; putrescine from agmatine: step 1/1. Its function is as follows. Catalyzes the hydrolysis of L-arginine to urea and L-ornithine. The latter can be utilized in the urea cycle or as a precursor for the synthesis of both polyamines and proline. Possesses agmatinase activity. Catalyzes the formation of putrescine from agmatine. This is Arginase 2, chloroplastic/mitochondrial (ARGAH2) from Arabidopsis thaliana (Mouse-ear cress).